The following is a 391-amino-acid chain: Phosphoglycerate kinase (391 aa).

Residues 21–23 (DLN), R36, 59–62 (HLGR), R113, and R146 contribute to the substrate site. ATP is bound by residues K197, E319, and 345-348 (GGDT).

It belongs to the phosphoglycerate kinase family. As to quaternary structure, monomer.

The protein localises to the cytoplasm. The catalysed reaction is (2R)-3-phosphoglycerate + ATP = (2R)-3-phospho-glyceroyl phosphate + ADP. It participates in carbohydrate degradation; glycolysis; pyruvate from D-glyceraldehyde 3-phosphate: step 2/5. This is Phosphoglycerate kinase from Pseudoalteromonas translucida (strain TAC 125).